Reading from the N-terminus, the 80-residue chain is Small ribosomal subunit protein bS16c (80 aa).

This sequence belongs to the bacterial ribosomal protein bS16 family.

The protein resides in the plastid. It localises to the chloroplast. The sequence is that of Small ribosomal subunit protein bS16c from Lotus japonicus (Lotus corniculatus var. japonicus).